The chain runs to 127 residues: Gamma-synuclein (127 aa).

Repeat copies occupy residues 20-30 and 31-41. A 4 X 11 AA tandem repeats of [EGSA]-K-T-K-[EQ]-[GQ]-V-X(4) region spans residues 20–67; sequence EKTKQGVTEAAEKTKEGVMYVGTKTKENVVHSVTSVAEKTKEQANAVS. Residues 42–56 form a 3; approximate repeat; the sequence is TKTKENVVHSVTSVA. Repeat unit 4 spans residues 57–67; it reads EKTKEQANAVS. 2 positions are modified to phosphoserine: Ser-67 and Ser-72. A disordered region spans residues 97–127; the sequence is KEDLKPSAPQQEGEAAKEKEEVAEEAQSGGD. Position 124 is a phosphoserine; by BARK1, CaMK2 and CK2 (Ser-124).

The protein belongs to the synuclein family. In terms of assembly, may be a centrosome-associated protein. Interacts with MYOC; affects its secretion and its aggregation. Post-translationally, phosphorylated. Phosphorylation by GRK5 appears to occur on residues distinct from the residue phosphorylated by other kinases.

Its subcellular location is the cytoplasm. It is found in the perinuclear region. The protein localises to the cytoskeleton. It localises to the microtubule organizing center. The protein resides in the centrosome. Its subcellular location is the spindle. Functionally, plays a role in neurofilament network integrity. May be involved in modulating axonal architecture during development and in the adult. In vitro, increases the susceptibility of neurofilament-H to calcium-dependent proteases. May also function in modulating the keratin network in skin. Activates the MAPK and Elk-1 signal transduction pathway. In Macaca fascicularis (Crab-eating macaque), this protein is Gamma-synuclein (SNCG).